The following is a 435-amino-acid chain: Putrescine transporter PotE (435 aa).

A run of 12 helical transmembrane segments spans residues 8–28 (IGVVQLTILTMVNMMGSGIIM), 39–59 (ISIVSWLVTAVGSTALAYAFA), 95–115 (LVIANTAIAISAVGYGSELFG), 117–137 (ILSPLSIALWTIFTLWLATVL), 148–168 (ISSFTIWGVIIPVVGISIIGW), 185–205 (VPTFEAIGVSISMTLWAFLGL), 224–244 (IAVLGGTLGAAVIYIVSTNVI), 275–295 (VIMGLMVMSCFGSLLGWQFTI), 320–340 (APVVGMITITALQTLLSLMTI), 354–374 (LAVVTNVIPYLLSMAALAVLL), 386–406 (TTVFVAFIGSLYSIYALYAAG), and 409–429 (AMLYGSIVTFIGWTLYGFVSY).

Belongs to the amino acid-polyamine-organocation (APC) superfamily. Basic amino acid/polyamine antiporter (APA) (TC 2.A.3.2) family.

It localises to the cell inner membrane. It catalyses the reaction putrescine(in) + H(+)(in) = putrescine(out) + H(+)(out). It carries out the reaction putrescine(in) + L-ornithine(out) = putrescine(out) + L-ornithine(in). In terms of biological role, catalyzes both the uptake and excretion of putrescine. The uptake of putrescine is dependent on the membrane potential and the excretion involves putrescine-ornithine antiporter activity. The chain is Putrescine transporter PotE from Haemophilus influenzae (strain ATCC 51907 / DSM 11121 / KW20 / Rd).